We begin with the raw amino-acid sequence, 438 residues long: GTPase Der (438 aa).

2 consecutive EngA-type G domains span residues 4–168 (PIVA…KNEG) and 177–352 (IKIA…DNYC). Residues 10 to 17 (GRPNVGKS), 57 to 61 (DTGGI), 120 to 123 (NKID), 183 to 190 (GKPNVGKS), 230 to 234 (DTAGV), and 295 to 298 (NKWD) contribute to the GTP site. The 85-residue stretch at 353 to 437 (KQIKTGILND…GIKLEFRERK (85 aa)) folds into the KH-like domain.

This sequence belongs to the TRAFAC class TrmE-Era-EngA-EngB-Septin-like GTPase superfamily. EngA (Der) GTPase family. In terms of assembly, associates with the 50S ribosomal subunit.

Functionally, GTPase that plays an essential role in the late steps of ribosome biogenesis. This Clostridium kluyveri (strain NBRC 12016) protein is GTPase Der.